A 235-amino-acid chain; its full sequence is Ubiquinone biosynthesis O-methyltransferase (235 aa).

Residues Arg-40, Gly-60, Asp-81, and Met-125 each coordinate S-adenosyl-L-methionine.

It belongs to the methyltransferase superfamily. UbiG/COQ3 family.

It catalyses the reaction a 3-demethylubiquinol + S-adenosyl-L-methionine = a ubiquinol + S-adenosyl-L-homocysteine + H(+). The catalysed reaction is a 3-(all-trans-polyprenyl)benzene-1,2-diol + S-adenosyl-L-methionine = a 2-methoxy-6-(all-trans-polyprenyl)phenol + S-adenosyl-L-homocysteine + H(+). It participates in cofactor biosynthesis; ubiquinone biosynthesis. Functionally, O-methyltransferase that catalyzes the 2 O-methylation steps in the ubiquinone biosynthetic pathway. This chain is Ubiquinone biosynthesis O-methyltransferase, found in Nitrosomonas europaea (strain ATCC 19718 / CIP 103999 / KCTC 2705 / NBRC 14298).